The primary structure comprises 483 residues: MKTLNRRDFPGAQYPERIIQFGEGNFLRAFVDWQIDLLNEHTDLNSGVVVVRPIETSFPPSLSTQDGLYTTIIRGLNEKGEAVSDARLIRSVNREISVYSEYDEFLKLAHNPEMRFVFSNTTEAGISYHAGDKFDDAPAVSYPAKLTRLLFERFSHFNGALDKGWIIIPCELIDYNGDALRELVLRYAQEWALPEAFIQWLDQANSFCSTLVDRIVTGYPRDEVAKLEEELGYHDGFLDTAEHFYLFVIQGPKSLATELRLDKYPLNVLIVDDIKPYKERKVAILNGAHTALVPVAFQAGLDTVGEAMNDAEICAFVEKAIYEEIIPVLDLPRDELESFASAVTGRFRNPYIKHQLLSIALNGMTKFRTRILPQLLAGQKANGTLPARLTFALAALIAFYRGERNGETYPVQDDAHWLERYQQLWSQHRDRVIGTQELVAIVLAEKDHWEQDLTQVPGLVEQVANDLDAILEKGMREAVRPLC.

An NAD(+)-binding site is contributed by Ile18–Ala29.

This sequence belongs to the mannitol dehydrogenase family. UxaB subfamily.

The enzyme catalyses D-altronate + NAD(+) = keto-D-tagaturonate + NADH + H(+). Its pathway is carbohydrate metabolism; pentose and glucuronate interconversion. The sequence is that of Altronate oxidoreductase (uxaB) from Escherichia coli O157:H7.